The sequence spans 293 residues: Small ribosomal subunit protein uS3 (293 aa).

Residues 39–107 form the KH type-2 domain; it reads VREYLKAKLK…PVAVNIEEVR (69 aa). The tract at residues 210–293 is disordered; it reads RNDLPAVETP…PATAADGKGE (84 aa). Positions 219-238 are enriched in basic and acidic residues; sequence PRPEEERRPRGPRRDGRPGG.

Belongs to the universal ribosomal protein uS3 family. As to quaternary structure, part of the 30S ribosomal subunit. Forms a tight complex with proteins S10 and S14.

Functionally, binds the lower part of the 30S subunit head. Binds mRNA in the 70S ribosome, positioning it for translation. The protein is Small ribosomal subunit protein uS3 of Paracidovorax citrulli (strain AAC00-1) (Acidovorax citrulli).